Here is a 1135-residue protein sequence, read N- to C-terminus: Integrin alpha-7 (1135 aa).

Positions 1–33 (MARIPRCDFLGLPGICYLLSFLLAGLLLPRASA) are cleaved as a signal peptide. At 34–1036 (FNLDVMGAIR…VAVVAEGVPW (1003 aa)) the chain is on the extracellular side. 7 FG-GAP repeats span residues 38-103 (VMGA…ETDC), 110-165 (RGAN…RCFV), 185-238 (EGRP…DPDQ), 248-305 (DRLT…ASRL), 306-367 (IPEV…HWAD), 368-423 (ISPL…GVVT), and 427-486 (QVLE…IDPR). N-linked (GlcNAc...) asparagine glycosylation is present at asparagine 86. 3 cysteine pairs are disulfide-bonded: cysteine 94–cysteine 103, cysteine 140–cysteine 163, and cysteine 184–cysteine 197. Positions 328, 330, 332, 336, 390, 392, 394, 398, 448, 450, 452, 454, and 456 each coordinate Ca(2+). 6 cysteine pairs are disulfide-bonded: cysteine 495–cysteine 502, cysteine 508–cysteine 571, cysteine 637–cysteine 643, cysteine 736–cysteine 747, cysteine 894–cysteine 948, and cysteine 955–cysteine 960. Asparagine 741 carries an N-linked (GlcNAc...) asparagine glycan. Basic and acidic residues predominate over residues 905 to 916 (VDSRDRRRRELG). The disordered stretch occupies residues 905-933 (VDSRDRRRRELGQPEPQEPPEKVEPSTSW). Asparagine 943 carries N-linked (GlcNAc...) asparagine glycosylation. N-linked (GlcNAc...) asparagine glycosylation is found at asparagine 979 and asparagine 999. A helical transmembrane segment spans residues 1037–1057 (WVILLAVLAGLLVLALLVLLL). Residues 1058 to 1135 (WKLGFFKRAK…PDGHPVSVTA (78 aa)) are Cytoplasmic-facing. The GFFKR motif motif lies at 1061–1065 (GFFKR). 3 repeat units span residues 1111 to 1114 (DAHP), 1119 to 1122 (DWHP), and 1127 to 1130 (DGHP). Positions 1111 to 1130 (DAHPILAADWHPELGPDGHP) are 3 X 4 AA repeats of D-X-H-P.

This sequence belongs to the integrin alpha chain family. As to quaternary structure, interacts (via C-terminus intracellular tail region) with CIB1; the interaction is stabilized/increased in a calcium- and magnesium-dependent manner. Heterodimer of an alpha and a beta subunit. The alpha subunit is composed of a heavy and a light chain linked by a disulfide bond. Alpha-7 associates with beta-1. Interacts with COMP. In terms of processing, ADP-ribosylated on at least two sites of the extracellular domain in skeletal myotubes. Post-translationally, a 70 kDa form is created by proteolytic cleavage. Cleavage is elevated during myogenic differentiation and the cleaved form enhances cell adhesion and spreading on laminin. Expressed in skeletal and cardiac muscle. Expressed in replicating myoblasts. In differentiated muscle fibers localizes between fibers and the surrounding matrix. Isoform Alpha-7X1A and isoform Alpha-7X1B are expressed at myotendinous and neuromuscular junctions; isoform Alpha-7X1C is expressed at neuromuscular junctions and at extrasynaptic sites.

It is found in the membrane. In terms of biological role, integrin alpha-7/beta-1 is the primary laminin receptor on skeletal myoblasts and adult myofibers. During myogenic differentiation, it may induce changes in the shape and mobility of myoblasts, and facilitate their localization at laminin-rich sites of secondary fiber formation. Involved in the maintenance of the myofibers cytoarchitecture as well as for their anchorage, viability and functional integrity. Required to promote contractile phenotype acquisition in differentiated airway smooth muscle (ASM) cells. Acts as a Schwann cell receptor for laminin-2. Acts as a receptor of COMP and mediates its effect on vascular smooth muscle cells (VSMCs) maturation. The sequence is that of Integrin alpha-7 (Itga7) from Rattus norvegicus (Rat).